The sequence spans 1025 residues: Multidrug resistance protein MdtC (1025 aa).

12 helical membrane passes run 3 to 23 (FFAL…AITL), 333 to 353 (EVEQ…FLFL), 360 to 380 (IIPA…MYLC), 387 to 407 (LSLM…IVVL), 431 to 451 (VGFT…PLLL), 463 to 483 (FAVT…TLTP), 528 to 548 (LVGV…ISIP), 853 to 873 (VILI…LYES), 875 to 895 (VHPL…LLAL), 897 to 917 (LFNA…IGIV), 953 to 973 (PIMM…LSGG), and 984 to 1004 (ITIV…TPVV).

This sequence belongs to the resistance-nodulation-cell division (RND) (TC 2.A.6) family. MdtC subfamily. As to quaternary structure, part of a tripartite efflux system composed of MdtA, MdtB and MdtC. MdtC forms a heteromultimer with MdtB.

The protein localises to the cell inner membrane. In terms of biological role, the MdtABC tripartite complex confers resistance against novobiocin and deoxycholate. This is Multidrug resistance protein MdtC from Escherichia coli (strain UTI89 / UPEC).